The sequence spans 105 residues: Large ribosomal subunit protein bL21 (105 aa).

Belongs to the bacterial ribosomal protein bL21 family. Part of the 50S ribosomal subunit. Contacts protein L20.

Its function is as follows. This protein binds to 23S rRNA in the presence of protein L20. The protein is Large ribosomal subunit protein bL21 of Bacteroides fragilis (strain YCH46).